A 146-amino-acid chain; its full sequence is Small ribosomal subunit protein uS5 (146 aa).

Positions 8-71 (FEEVIVNIGR…DDAFKNIIDV (64 aa)) constitute an S5 DRBM domain.

This sequence belongs to the universal ribosomal protein uS5 family. In terms of assembly, part of the 30S ribosomal subunit. Contacts proteins S4 and S8.

With S4 and S12 plays an important role in translational accuracy. In terms of biological role, located at the back of the 30S subunit body where it stabilizes the conformation of the head with respect to the body. In Campylobacter hominis (strain ATCC BAA-381 / DSM 21671 / CCUG 45161 / LMG 19568 / NCTC 13146 / CH001A), this protein is Small ribosomal subunit protein uS5.